The following is a 97-amino-acid chain: Defensin-A2 (97 aa).

The signal sequence occupies residues 1-19; the sequence is MRTLSLLLALLFLAAQTLA. Positions 20-61 are excised as a propeptide; the sequence is QPIDEGAEEVITEEPEITETQDPTTIMLIERGIGGDSTDATR. 3 disulfides stabilise this stretch: cysteine 66-cysteine 93, cysteine 68-cysteine 82, and cysteine 72-cysteine 92. Positions 96-97 are excised as a propeptide; sequence TS.

It belongs to the alpha-defensin family. Highly expressed in intestine, expressed at lower levels in spleen, and at very low levels in kidney and lung.

It localises to the secreted. Functionally, has antimicrobial activity. This is Defensin-A2 from Ornithorhynchus anatinus (Duckbill platypus).